Consider the following 91-residue polypeptide: Hepcidin-2 (91 aa).

The N-terminal stretch at 1 to 24 (MKLSNVFLAAVVILTCVCVFQITA) is a signal peptide. Positions 25–64 (VPFIQQVQDEHHVESEELQENQHLTEAEHRLTDPLVLFRT) are excised as a propeptide. 4 disulfide bridges follow: Cys73–Cys89, Cys76–Cys79, Cys77–Cys85, and Cys80–Cys88.

This sequence belongs to the hepcidin family.

The protein resides in the secreted. Functionally, seems to act as a signaling molecule involved in the maintenance of iron homeostasis. Seems to be required in conjunction with HFE to regulate both intestinal iron absorption and iron storage in macrophages. May also have antimicrobial activity. The sequence is that of Hepcidin-2 (hamp2) from Danio rerio (Zebrafish).